Reading from the N-terminus, the 299-residue chain is Protoheme IX farnesyltransferase (299 aa).

A run of 8 helical transmembrane segments spans residues 25–45, 51–71, 97–117, 119–139, 147–167, 173–193, 225–245, and 275–295; these read IVSL…PDLA, LFGT…NHLI, ALAF…FLVN, LTAW…TAFL, IVLG…AVTG, AFLL…ALAL, FLLF…LLYL, and FGYS…DHYL.

It belongs to the UbiA prenyltransferase family. Protoheme IX farnesyltransferase subfamily.

It is found in the cell inner membrane. The catalysed reaction is heme b + (2E,6E)-farnesyl diphosphate + H2O = Fe(II)-heme o + diphosphate. The protein operates within porphyrin-containing compound metabolism; heme O biosynthesis; heme O from protoheme: step 1/1. In terms of biological role, converts heme B (protoheme IX) to heme O by substitution of the vinyl group on carbon 2 of heme B porphyrin ring with a hydroxyethyl farnesyl side group. This Nitrosococcus oceani (strain ATCC 19707 / BCRC 17464 / JCM 30415 / NCIMB 11848 / C-107) protein is Protoheme IX farnesyltransferase.